A 156-amino-acid polypeptide reads, in one-letter code: Phosphopantetheine adenylyltransferase (156 aa).

Substrate is bound at residue T9. Residues T9–F10 and H17 contribute to the ATP site. 3 residues coordinate substrate: K41, L73, and R87. ATP contacts are provided by residues G88–R90, E98, and W123–T129.

It belongs to the bacterial CoaD family. As to quaternary structure, homohexamer. It depends on Mg(2+) as a cofactor.

Its subcellular location is the cytoplasm. It carries out the reaction (R)-4'-phosphopantetheine + ATP + H(+) = 3'-dephospho-CoA + diphosphate. The protein operates within cofactor biosynthesis; coenzyme A biosynthesis; CoA from (R)-pantothenate: step 4/5. Reversibly transfers an adenylyl group from ATP to 4'-phosphopantetheine, yielding dephospho-CoA (dPCoA) and pyrophosphate. In Haemophilus influenzae (strain 86-028NP), this protein is Phosphopantetheine adenylyltransferase.